We begin with the raw amino-acid sequence, 337 residues long: Putative transcription activator protein HfaB (337 aa).

Residues 303–313 (AYNNLGTNNAQ) show a composition bias toward polar residues. The disordered stretch occupies residues 303–337 (AYNNLGTNNAQTRDDPSRWNARRDPDIRDAKRGRY). The span at 314–337 (TRDDPSRWNARRDPDIRDAKRGRY) shows a compositional bias: basic and acidic residues.

In terms of biological role, required for the attachment of the holdfast to the cell. May be involved in the positive regulation of hfaC. This is Putative transcription activator protein HfaB (hfaB) from Caulobacter vibrioides (strain ATCC 19089 / CIP 103742 / CB 15) (Caulobacter crescentus).